Reading from the N-terminus, the 1320-residue chain is FERM and PDZ domain-containing protein 4 (1320 aa).

A WW domain is found at 33–66; the sequence is QVPPYGWEMMTNRDGRDYFINHMTQAIPFDDPRF. The region spanning 78–155 is the PDZ domain; the sequence is KVEMRRDPVL…SILLTVIQPY (78 aa). The FERM domain occupies 204–519; sequence NVLKVYLENG…GYYRLLVDSR (316 aa). Disordered stretches follow at residues 809–847, 897–927, 949–981, 1024–1050, 1114–1139, and 1204–1274; these read APPP…EIPV, YSPE…QKQS, TEFP…PPKV, KRKS…QQGT, PRGP…ADDA, and GHFS…ATFE. The span at 900–913 shows a compositional bias: low complexity; sequence ESSSDSGNETNSSE. A compositionally biased stretch (polar residues) spans 1204–1217; it reads GHFSLQSSQGSSVD. Residues 1223–1232 show a composition bias toward low complexity; it reads GSSSSACATP.

Interacts (via C-terminus) with DLG1, DLG2, DLG3 and DLG4/PSD95. Interacts (via N-terminus) with ARHGEF7; the interaction is mediated by the PDZ domain. Interacts with GPSM2 (via TPR repeat region). As to expression, expressed in various regions of the brain, including cortex, hippocampus, cerebellum, olfactory bulb and medial habenular nucleus.

It localises to the cell projection. Its subcellular location is the dendritic spine. In terms of biological role, positive regulator of dendritic spine morphogenesis and density. Required for the maintenance of excitatory synaptic transmission. Binds phosphatidylinositol 4,5-bisphosphate. In Mus musculus (Mouse), this protein is FERM and PDZ domain-containing protein 4 (Frmpd4).